Reading from the N-terminus, the 456-residue chain is Putative dihydroorotase (456 aa).

The protein belongs to the metallo-dependent hydrolases superfamily. DHOase family. Class I DHOase subfamily.

It catalyses the reaction (S)-dihydroorotate + H2O = N-carbamoyl-L-aspartate + H(+). It participates in pyrimidine metabolism; UMP biosynthesis via de novo pathway; (S)-dihydroorotate from bicarbonate: step 3/3. Functionally, catalyzes the reversible cyclization of carbamoyl aspartate to dihydroorotate. The sequence is that of Putative dihydroorotase from Rhodopirellula baltica (strain DSM 10527 / NCIMB 13988 / SH1).